Reading from the N-terminus, the 842-residue chain is MVTVGNYCEAEGPVGPAWMQDGLSPCFFFTLVPSTRMALGTLALVLALPCRRRERPAGADSLSWGAGPRISPYVLQLLLATLQAALPLAGLAGRVGTARGAPLPSYLLLASVLESLAGACGLWLLVVERSQARQRLAMGIWIKFRHSPGLLLLWTVAFAAENLALVSWNSPQWWWARADLGQQVQFSLWVLRYVVSGGLFVLGLWAPGLRPQSYTLQVHEEDQDVERSQVRSAAQQSTWRDFGRKLRLLSGYLWPRGSPALQLVVLICLGLMGLERALNVLVPIFYRNIVNLLTEKAPWNSLAWTVTSYVFLKFLQGGGTGSTGFVSNLRTFLWIRVQQFTSRRVELLIFSHLHELSLRWHLGRRTGEVLRIADRGTSSVTGLLSYLVFNVIPTLADIIIGIIYFSMFFNAWFGLIVFLCMSLYLTLTIVVTEWRTKFRRAMNTQENATRARAVDSLLNFETVKYYNAESYEVERYREAIIKYQGLEWKSSASLVLLNQTQNLVIGLGLLAGSLLCAYFVTEQKLQVGDYVLFGTYIIQLYMPLNWFGTYYRMIQTNFIDMENMFDLLKEETEVKDLPGAGPLRFQKGRIEFENVHFSYADGRETLQDVSFTVMPGQTLALVGPSGAGKSTILRLLFRFYDISSGCIRIDGQDISQVTQASLRSHIGVVPQDTVLFNDTIADNIRYGRVTAGNDEVEAAAQAAGIHDAIMAFPEGYRTQVGERGLKLSGGEKQRVAIARTILKAPGIILLDEATSALDTSNERAIQASLAKVCANRTTIVVAHRLSTVVNADQILVIKDGCIVERGRHEALLSRGGVYADMWQLQQGQEETSEDTKPQTMER.

Residues 1-26 lie on the Lumenal side of the membrane; sequence MVTVGNYCEAEGPVGPAWMQDGLSPC. The segment at 1-205 is required for the lysosomal targeting; it reads MVTVGNYCEA…SGGLFVLGLW (205 aa). The interval 1–236 is required for ATPase activity; the sequence is MVTVGNYCEA…RSQVRSAAQQ (236 aa). Asn6 carries N-linked (GlcNAc...) asparagine glycosylation. Cys8 and Cys26 are joined by a disulfide. A helical membrane pass occupies residues 27–47; sequence FFFTLVPSTRMALGTLALVLA. Residues 48–72 lie on the Cytoplasmic side of the membrane; that stretch reads LPCRRRERPAGADSLSWGAGPRISP. A helical membrane pass occupies residues 73–93; it reads YVLQLLLATLQAALPLAGLAG. The Lumenal segment spans residues 94-106; that stretch reads RVGTARGAPLPSY. A helical membrane pass occupies residues 107 to 127; it reads LLLASVLESLAGACGLWLLVV. At 128-147 the chain is on the cytoplasmic side; it reads ERSQARQRLAMGIWIKFRHS. The helical transmembrane segment at 148-168 threads the bilayer; the sequence is PGLLLLWTVAFAAENLALVSW. Over 169 to 185 the chain is Lumenal; sequence NSPQWWWARADLGQQVQ. Residues 186 to 206 traverse the membrane as a helical segment; that stretch reads FSLWVLRYVVSGGLFVLGLWA. The Cytoplasmic segment spans residues 207 to 263; sequence PGLRPQSYTLQVHEEDQDVERSQVRSAAQQSTWRDFGRKLRLLSGYLWPRGSPALQL. The helical transmembrane segment at 264–284 threads the bilayer; the sequence is VVLICLGLMGLERALNVLVPI. Residues 265–556 enclose the ABC transmembrane type-1 domain; sequence VLICLGLMGL…FGTYYRMIQT (292 aa). Residues 285–291 are Lumenal-facing; that stretch reads FYRNIVN. Residues 292–312 traverse the membrane as a helical segment; sequence LLTEKAPWNSLAWTVTSYVFL. At 313-375 the chain is on the cytoplasmic side; that stretch reads KFLQGGGTGS…TGEVLRIADR (63 aa). The helical transmembrane segment at 376-396 threads the bilayer; sequence GTSSVTGLLSYLVFNVIPTLA. Asp397 is a topological domain (lumenal). The helical transmembrane segment at 398–418 threads the bilayer; that stretch reads IIIGIIYFSMFFNAWFGLIVF. The Cytoplasmic portion of the chain corresponds to 419-499; it reads LCMSLYLTLT…SSASLVLLNQ (81 aa). Residues 500-520 form a helical membrane-spanning segment; sequence TQNLVIGLGLLAGSLLCAYFV. At 521 to 529 the chain is on the lumenal side; that stretch reads TEQKLQVGD. The chain crosses the membrane as a helical span at residues 530–550; sequence YVLFGTYIIQLYMPLNWFGTY. The Cytoplasmic portion of the chain corresponds to 551-842; sequence YRMIQTNFID…EDTKPQTMER (292 aa). The ABC transporter domain occupies 590 to 824; the sequence is IEFENVHFSY…GGVYADMWQL (235 aa). ATP contacts are provided by residues Tyr599 and 623 to 634; that span reads GPSGAGKSTILR.

It belongs to the ABC transporter superfamily. ABCB family. Heavy Metal importer (TC 3.A.1.210) subfamily. As to quaternary structure, homodimer. Post-translationally, N-glycosylated. As to expression, widely expressed. High expression is detected in the retinal epithelium. Expressed in mature erythrocytes.

Its subcellular location is the cell membrane. It is found in the mitochondrion outer membrane. It localises to the endoplasmic reticulum membrane. The protein localises to the golgi apparatus membrane. The protein resides in the endosome membrane. Its subcellular location is the lysosome membrane. It is found in the late endosome membrane. It localises to the early endosome membrane. The protein localises to the secreted. The protein resides in the extracellular exosome. Its subcellular location is the mitochondrion. It is found in the endosome. It localises to the multivesicular body membrane. The protein localises to the melanosome membrane. The catalysed reaction is heme b(in) + ATP + H2O = heme b(out) + ADP + phosphate + H(+). The enzyme catalyses coproporphyrin III(in) + ATP + H2O = coproporphyrin III(out) + ADP + phosphate + H(+). It carries out the reaction pheophorbide a(in) + ATP + H2O = pheophorbide a(out) + ADP + phosphate + H(+). It catalyses the reaction coproporphyrinogen III(in) + ATP + H2O = coproporphyrinogen III(out) + ADP + phosphate + H(+). The catalysed reaction is protoporphyrin IX(in) + ATP + H2O = protoporphyrin IX(out) + ADP + phosphate + H(+). The enzyme catalyses coproporphyrin I(in) + ATP + H2O = coproporphyrin I(out) + ADP + phosphate + H(+). It carries out the reaction uroporphyrin I(in) + ATP + H2O = uroporphyrin I(out) + ADP + phosphate + H(+). It catalyses the reaction uroporphyrin III(in) + ATP + H2O = uroporphyrin III(out) + ADP + phosphate + H(+). With respect to regulation, ATPase activity is inhibited by MgATP with an IC(50) of 1.03 mM and up-regulated by coporphyrin III&gt; hemin &gt; protoporphyrin IX. ATPase activity for hemin is up-regulated by glutathione. The ATPase activity is impaired by increasing copper concentrations (0-300 uM). The ATPase activity is stimulated in presence of glutathione for increasing copper concentrations (0-300 uM). ATP-dependent transporter that catalyzes the transport of a broad-spectrum of porphyrins from the cytoplasm to the extracellular space through the plasma membrane or into the vesicle lumen. May also function as an ATP-dependent importer of porphyrins from the cytoplasm into the mitochondria, in turn may participate in the de novo heme biosynthesis regulation and in the coordination of heme and iron homeostasis during phenylhydrazine stress. May also play a key role in the early steps of melanogenesis producing PMEL amyloid fibrils. In vitro, it confers to cells a resistance to toxic metal such as arsenic and cadmium and against chemotherapeutics agent such as 5-fluorouracil, SN-38 and vincristin. In addition may play a role in the transition metal homeostasis. This chain is ATP-binding cassette sub-family B member 6, found in Homo sapiens (Human).